Here is a 155-residue protein sequence, read N- to C-terminus: Riboflavin kinase (155 aa).

Positions 15, 21, 27, and 29 each coordinate ATP. Threonine 27 and asparagine 29 together coordinate Mg(2+). The Nucleophile role is filled by glutamate 79. Positions 82, 84, and 91 each coordinate ATP. FMN is bound by residues arginine 104, lysine 107, and phenylalanine 109.

Monomer. Directly interacts with TNFRSF1A death domain. TNFRSF1A-binding may be supported by TRADD. In the absence of TNFRSF1A, interacts with TRADD. Independently of TNFRSF1A, interacts with the NADPH oxidase subunit CYBA. The cofactor is Zn(2+). It depends on Mg(2+) as a cofactor. As to expression, detected in brain, placenta and urinary bladder.

The protein localises to the cytoplasm. The enzyme catalyses riboflavin + ATP = FMN + ADP + H(+). It participates in cofactor biosynthesis; FMN biosynthesis; FMN from riboflavin (ATP route): step 1/1. Catalyzes the phosphorylation of riboflavin (vitamin B2) to form flavin-mononucleotide (FMN), hence rate-limiting enzyme in the synthesis of FAD. Essential for TNF-induced reactive oxygen species (ROS) production. Through its interaction with both TNFRSF1A and CYBA, physically and functionally couples TNFRSF1A to NADPH oxidase. TNF-activation of RFK may enhance the incorporation of FAD in NADPH oxidase, a critical step for the assembly and activation of NADPH oxidase. In Homo sapiens (Human), this protein is Riboflavin kinase (RFK).